Here is a 259-residue protein sequence, read N- to C-terminus: tRNA pseudouridine synthase A (259 aa).

The active-site Nucleophile is the D52. Residue Y110 participates in substrate binding.

It belongs to the tRNA pseudouridine synthase TruA family. In terms of assembly, homodimer.

It catalyses the reaction uridine(38/39/40) in tRNA = pseudouridine(38/39/40) in tRNA. In terms of biological role, formation of pseudouridine at positions 38, 39 and 40 in the anticodon stem and loop of transfer RNAs. This is tRNA pseudouridine synthase A from Coprothermobacter proteolyticus (strain ATCC 35245 / DSM 5265 / OCM 4 / BT).